The sequence spans 842 residues: G-type lectin S-receptor-like serine/threonine-protein kinase At1g11330 (842 aa).

Positions M1–G29 are cleaved as a signal peptide. Residues E30–N444 lie on the Extracellular side of the membrane. Residues R32–S157 form the Bulb-type lectin domain. 6 N-linked (GlcNAc...) asparagine glycosylation sites follow: N63, N94, N122, N130, N196, and N260. Residues P294–T330 form the EGF-like; atypical domain. 2 cysteine pairs are disulfide-bonded: C298–C310 and C304–C318. N328, N336, N354, and N396 each carry an N-linked (GlcNAc...) asparagine glycan. Residues C349 to A435 form the PAN domain. 2 cysteine pairs are disulfide-bonded: C389–C410 and C393–C399. Residues L445 to L465 form a helical membrane-spanning segment. Residues L466–R842 are Cytoplasmic-facing. The region spanning F524–F810 is the Protein kinase domain. Residues L530–V538 and K552 contribute to the ATP site. Phosphoserine occurs at positions 558 and 573. Residues M613–I630 form a caM-binding region. The Proton acceptor role is filled by D649. 2 positions are modified to phosphoserine: S653 and S666. A Phosphothreonine modification is found at T683. 4 positions are modified to phosphoserine: S726, S727, S821, and S830. Residues R814–R842 form a disordered region. Over residues E818–Q827 the composition is skewed to low complexity. The segment covering K828–R842 has biased composition (polar residues). T837 bears the Phosphothreonine mark.

The protein belongs to the protein kinase superfamily. Ser/Thr protein kinase family.

Its subcellular location is the cell membrane. The catalysed reaction is L-seryl-[protein] + ATP = O-phospho-L-seryl-[protein] + ADP + H(+). It catalyses the reaction L-threonyl-[protein] + ATP = O-phospho-L-threonyl-[protein] + ADP + H(+). This is G-type lectin S-receptor-like serine/threonine-protein kinase At1g11330 from Arabidopsis thaliana (Mouse-ear cress).